Here is a 410-residue protein sequence, read N- to C-terminus: Cytochrome P450 105A3 (410 aa).

Position 359 (Cys-359) interacts with heme.

This sequence belongs to the cytochrome P450 family. In terms of assembly, monomer. It depends on heme as a cofactor.

Functionally, catalyzes the hydroxylation of sodium ML-236B carboxylate to pravastatin. The chain is Cytochrome P450 105A3 (cyp105A3) from Streptomyces carbophilus.